We begin with the raw amino-acid sequence, 420 residues long: COP9 signalosome complex subunit 11 (420 aa).

A PCI domain is found at 177–346 (SIHEHPSLVD…VYYKEDLPVG (170 aa)). The tract at residues 386-420 (VEPLNRSQDMDAFELHEQSEDEEYEEEHLEEGENV) is disordered. The span at 404–420 (SEDEEYEEEHLEEGENV) shows a compositional bias: acidic residues.

As to quaternary structure, component of a COP9 signalosome-like (CSN) complex.

Its subcellular location is the cytoplasm. The protein resides in the nucleus. Its function is as follows. Component of the COP9 signalosome (CSN) complex that acts as an regulator of the ubiquitin (Ubl) conjugation pathway by mediating the deneddylation of the cullin subunit of SCF-type E3 ubiquitin-protein ligase complexes The CSN complex is involved in the regulation of the mating pheromone response. PCI8 may also be involved in transcriptional and translational control. This chain is COP9 signalosome complex subunit 11 (PCI8), found in Eremothecium gossypii (strain ATCC 10895 / CBS 109.51 / FGSC 9923 / NRRL Y-1056) (Yeast).